The chain runs to 181 residues: ABC transporter E family member 3 (181 aa).

The 157-residue stretch at 20–176 (SQIIVMLGEN…KAAFARFHNG (157 aa)) folds into the ABC transporter domain. Residue 27-34 (GENGTGKT) participates in ATP binding.

The protein belongs to the ABC transporter superfamily. ABCE family. As to expression, mostly expressed in roots and leaves, and, to a lower extent, in stems, flowers and siliques.

The sequence is that of ABC transporter E family member 3 (ABCE3) from Arabidopsis thaliana (Mouse-ear cress).